The sequence spans 125 residues: Urotensin-2 (125 aa).

The first 20 residues, 1–20, serve as a signal peptide directing secretion; it reads MYKLASCCLLFIGFLNPLFS. Positions 21 to 111 are excised as a propeptide; it reads LPLLDSGEVS…HLLARIRKPY (91 aa). Cysteine 119 and cysteine 124 are joined by a disulfide.

This sequence belongs to the urotensin-2 family.

Its subcellular location is the secreted. Functionally, highly potent vasoconstrictor. The chain is Urotensin-2 (UTS2) from Macaca mulatta (Rhesus macaque).